A 263-amino-acid polypeptide reads, in one-letter code: MPSAAVSVPEVPSSDRKTVYLVTGASRGLGRGLVQAFLLRPNSIVIAGLRNRTSQAGALDALPRGENSSLIAVQLDSGSKSDPADAVSILQRDYGITHLDVVIANAAIAANYGPASTMPLEYLETHMQINAYAALLLFQATRVLLQAAKSPQFICVGAPISTITEMESCARAPLTNYALSKLAACYLVRKIHFENKWLVAYIVDPGHIQSDMGAQAARLFGRKEAPTTIEESVAGICARMTEADKNTTSGRFILFSDGSDVPW.

The NADP(+) site is built by L29, D76, N105, Y177, K181, I208, and S210. The active-site Proton donor is the Y177. K181 functions as the Lowers pKa of active site Tyr in the catalytic mechanism.

It belongs to the short-chain dehydrogenases/reductases (SDR) family.

The catalysed reaction is (1'S)-averantin + NADP(+) = norsolorinic acid + NADPH + H(+). It functions in the pathway mycotoxin biosynthesis; sterigmatocystin biosynthesis. Functionally, short chain dehydrogenase; part of the gene cluster that mediates the biosynthesis of sterigmatocystin (ST), a polyketide-derived furanocoumarin which is part of the most toxic and carcinogenic compounds among the known mycotoxins. The first step in the biosynthesis of sterigmatocystin is the production of hexanoate by the fatty acid synthase (FAS) units stcJ and stcK. The polyketide backbone is assembled by the non-reducing polyketide synthase stcA by condensation of the starter hexanoyl-CoA and 7 malonyl-CoA extender units followed by cyclization and release of norsolorinic acid. Norsolorinic acid is the first stable intermediate in the biosynthesis of sterigmatocystin and is converted into averantin (AVN) by the ketoreductase stcE which reduces the hexanoate ketone to an alcohol. Averantin is then oxidized into 5'-hydroxyaverantin (HAVN) by the cytochrome P450 monooxygenase stcF. 5'-hydroxyaverantin is further converted to 5'-oxyaverantin (OAVN) by the 5'-hydroxyaverantin dehydrogenase stcG. The next step is the conversion of OAVN into averufin (AVF) which is catalyzed by a yet to be identified enzyme. The cytochrome P450 monooxygenase stcB and the flavin-binding monooxygenase stcW are both required for the conversion of averufin to 1-hydroxyversicolorone. The esterase stcI probably catalyzes the formation of versiconal hemiacetal acetate from 1-hydroxyversicolorone. The oxydoreductase stcN then probably catalyzes the biosynthetic step from versiconal to versicolorin B (VERB). The next step is performed by the versicolorin B desaturase stcL to produce versicolorin A (VERA). The ketoreductase stcU and the cytochrome P450 monooxygenase stcS are involved in the conversion of versicolorin A to demethylsterigmatocystin. The Baeyer-Villiger oxidas stcQ and the reductase stcR might be involved in the biosynthetic step from versicolorin A to demethylsterigmatocystin. The final step in the biosynthesis of sterigmatocystin is the methylation of demethylsterigmatocystin catalyzed by the methyltransferase stcP. This chain is Norsolorinic acid ketoreductase stcE, found in Emericella nidulans (strain FGSC A4 / ATCC 38163 / CBS 112.46 / NRRL 194 / M139) (Aspergillus nidulans).